A 242-amino-acid chain; its full sequence is Protein CDV3 homolog B (242 aa).

Basic and acidic residues predominate over residues 1 to 15; sequence MAEPEERSLDDFFAK. The disordered stretch occupies residues 1–242; it reads MAEPEERSLD…DNQYAVLGEQ (242 aa). An N-acetylalanine modification is found at Ala-2. Low complexity predominate over residues 30-57; the sequence is AAGSRGPARPSDGATSSSLSSYVSAAGK. The segment covering 59-75 has biased composition (basic and acidic residues); the sequence is VKKEKSGKSENPDQLQE. Residues 105-122 show a composition bias toward acidic residues; the sequence is KEDDENENKEEQGADWEE. Composition is skewed to polar residues over residues 129-143 and 183-194; these read DKSS…QAQA and SDTQFPSPQATA. The span at 195-213 shows a compositional bias: basic and acidic residues; that stretch reads KHTESRREKEMEKTFEIVK.

Belongs to the CDV3 family.

It localises to the cytoplasm. In Xenopus laevis (African clawed frog), this protein is Protein CDV3 homolog B (cdv3-b).